The sequence spans 320 residues: Phospho-N-acetylmuramoyl-pentapeptide-transferase (320 aa).

A run of 10 helical transmembrane segments spans residues 7-27 (ILAI…VIPF), 50-70 (GTPT…SLIF), 77-97 (IGAP…DDFI), 113-133 (LVLQ…HLGS), 148-168 (WAYV…VNLT), 173-193 (GLAS…SIFS), 198-216 (MAIF…LRYN), 221-241 (VVFM…AIAV), 247-267 (VLVL…MLQV), and 297-317 (VVVV…AMIQ).

It belongs to the glycosyltransferase 4 family. MraY subfamily. The cofactor is Mg(2+).

Its subcellular location is the cell membrane. The enzyme catalyses UDP-N-acetyl-alpha-D-muramoyl-L-alanyl-gamma-D-glutamyl-meso-2,6-diaminopimeloyl-D-alanyl-D-alanine + di-trans,octa-cis-undecaprenyl phosphate = di-trans,octa-cis-undecaprenyl diphospho-N-acetyl-alpha-D-muramoyl-L-alanyl-D-glutamyl-meso-2,6-diaminopimeloyl-D-alanyl-D-alanine + UMP. Its pathway is cell wall biogenesis; peptidoglycan biosynthesis. In terms of biological role, catalyzes the initial step of the lipid cycle reactions in the biosynthesis of the cell wall peptidoglycan: transfers peptidoglycan precursor phospho-MurNAc-pentapeptide from UDP-MurNAc-pentapeptide onto the lipid carrier undecaprenyl phosphate, yielding undecaprenyl-pyrophosphoryl-MurNAc-pentapeptide, known as lipid I. This chain is Phospho-N-acetylmuramoyl-pentapeptide-transferase, found in Caldicellulosiruptor bescii (strain ATCC BAA-1888 / DSM 6725 / KCTC 15123 / Z-1320) (Anaerocellum thermophilum).